The following is an 89-amino-acid chain: U1-hexatoxin-Iw1e (89 aa).

The signal sequence occupies residues 1 to 18 (MLKFVVLIFVVIMASTFA). Intrachain disulfides connect Cys-21–Cys-32, Cys-26–Cys-40, Cys-31–Cys-66, Cys-50–Cys-74, and Cys-68–Cys-81. Residues 87 to 89 (RSE) constitute a propeptide that is removed on maturation.

Belongs to the MIT-like AcTx family. In terms of tissue distribution, expressed by the venom gland.

It localises to the secreted. This chain is U1-hexatoxin-Iw1e, found in Illawarra wisharti (Illawarra funnel-web spider).